We begin with the raw amino-acid sequence, 365 residues long: Probable cinnamyl alcohol dehydrogenase (365 aa).

Cys-47 is a binding site for Zn(2+). Position 49 (Thr-49) interacts with NADP(+). 7 residues coordinate Zn(2+): His-69, Glu-70, Cys-100, Cys-103, Cys-106, Cys-114, and Cys-163. Residues Thr-167, 188–193, 211–216, Thr-251, Gly-275, and 298–300 each bind NADP(+); these read GLGGVG, SSSSKK, and SFI.

The protein belongs to the zinc-containing alcohol dehydrogenase family. In terms of assembly, homodimer. Zn(2+) is required as a cofactor.

It carries out the reaction (E)-cinnamyl alcohol + NADP(+) = (E)-cinnamaldehyde + NADPH + H(+). The catalysed reaction is (E)-coniferol + NADP(+) = (E)-coniferaldehyde + NADPH + H(+). The enzyme catalyses (E)-sinapyl alcohol + NADP(+) = (E)-sinapaldehyde + NADPH + H(+). It catalyses the reaction (E)-4-coumaroyl alcohol + NADP(+) = (E)-4-coumaraldehyde + NADPH + H(+). It carries out the reaction (E)-caffeyl alcohol + NADP(+) = (E)-caffeyl aldehyde + NADPH + H(+). It participates in aromatic compound metabolism; phenylpropanoid biosynthesis. Its function is as follows. Involved in lignin biosynthesis. Catalyzes the final step specific for the production of lignin monomers. Catalyzes the NADPH-dependent reduction of coniferaldehyde, 5-hydroxyconiferaldehyde, sinapaldehyde, 4-coumaraldehyde and caffeyl aldehyde to their respective alcohols. The polypeptide is Probable cinnamyl alcohol dehydrogenase (CAD) (Saccharum officinarum (Sugarcane)).